The sequence spans 68 residues: U-actitoxin-Avt1 (68 aa).

Residues 1-22 (MNSKAIISVFLIMLVVVSCTQA) form the signal peptide. Residues 23 to 40 (TYETEDDDEPGPRHSEKR) constitute a propeptide that is removed on maturation. Positions 24 to 50 (YETEDDDEPGPRHSEKRSCARGCGGDS) are disordered. Residues 32–41 (PGPRHSEKRS) show a composition bias toward basic and acidic residues. Disulfide bonds link Cys42-Cys54, Cys46-Cys59, and Cys52-Cys66.

In terms of biological role, stable protein with probable toxin activity. Does not show activity on all channels tested. Shows no hemolytic activity on rat erythrocytes. The chain is U-actitoxin-Avt1 from Aulactinia veratra (Green snakelock anemone).